The chain runs to 361 residues: tRNA/tmRNA (uracil-C(5))-methyltransferase (361 aa).

S-adenosyl-L-methionine-binding residues include Q183, Y211, N216, E232, and D294. The active-site Nucleophile is C319. The active-site Proton acceptor is E353.

This sequence belongs to the class I-like SAM-binding methyltransferase superfamily. RNA M5U methyltransferase family. TrmA subfamily.

The catalysed reaction is uridine(54) in tRNA + S-adenosyl-L-methionine = 5-methyluridine(54) in tRNA + S-adenosyl-L-homocysteine + H(+). The enzyme catalyses uridine(341) in tmRNA + S-adenosyl-L-methionine = 5-methyluridine(341) in tmRNA + S-adenosyl-L-homocysteine + H(+). Its function is as follows. Dual-specificity methyltransferase that catalyzes the formation of 5-methyluridine at position 54 (m5U54) in all tRNAs, and that of position 341 (m5U341) in tmRNA (transfer-mRNA). The polypeptide is tRNA/tmRNA (uracil-C(5))-methyltransferase (Acinetobacter baylyi (strain ATCC 33305 / BD413 / ADP1)).